The sequence spans 587 residues: Serine/threonine-protein phosphatase 2A 65 kDa regulatory subunit A gamma isoform (587 aa).

Residue serine 2 is modified to N-acetylserine. HEAT repeat units follow at residues 2-42 (SMVD…ALGE), 44-80 (RTRK…YVGG), 81-119 (VEYA…QMRE), 158-194 (DVLK…AATI), 197-235 (AHLK…LLEP), 236-274 (QDCV…AVGP), 276-313 (PTRT…ILNP), 314-352 (ELAI…VLGK), 353-391 (DATI…VIGI), 393-430 (LLSQ…QLGV), 432-469 (FFDE…EFGP), 470-508 (EWAM…VMGS), 509-547 (EITC…IVDQ), and 549-586 (VVEN…VMMS).

Belongs to the phosphatase 2A regulatory subunit A family. In terms of assembly, PP2A consists of a common heterodimeric core enzyme, composed of a 36 kDa catalytic subunit (subunit C) and a 65 kDa constant regulatory subunit (subunit A), that associates with a variety of regulatory subunits such as subunits B (the R2/B/PR55/B55, R3/B''/PR72/PR130/PR59 and R5/B'/B56 families). Interacts with CHIP. Interacts with SRK2E/OST1. Ubiquitinated. CHIP-mediated ubiquitination enhances phosphatase activity after an abiotic stress such as low temperature or darkness. In terms of tissue distribution, expressed ubiquitously at stable levels. However, higher protein levels in roots and flowers (at protein level).

The protein resides in the cytoplasm. It localises to the cytosol. The protein localises to the nucleus. In terms of biological role, the A subunit of protein phosphatase 2A serves as a scaffolding molecule to coordinate the assembly of the catalytic subunit and a variable regulatory B subunit. Involved during developmental process such as seedling and floral developments. Seems to act as a negative regulator of PP2A catalytic activity. The protein is Serine/threonine-protein phosphatase 2A 65 kDa regulatory subunit A gamma isoform (PP2AA3) of Arabidopsis thaliana (Mouse-ear cress).